Here is a 50-residue protein sequence, read N- to C-terminus: uncharacterized protein (50 aa).

It is found in the mitochondrion. This is an uncharacterized protein from Saccharomyces cerevisiae (strain ATCC 204508 / S288c) (Baker's yeast).